The primary structure comprises 374 residues: uncharacterized protein (374 aa).

Glycine 29–serine 36 lines the ATP pocket.

Belongs to the archaeal ATPase family.

This is an uncharacterized protein from Methanocaldococcus jannaschii (strain ATCC 43067 / DSM 2661 / JAL-1 / JCM 10045 / NBRC 100440) (Methanococcus jannaschii).